The sequence spans 238 residues: Pyridoxine 5'-phosphate synthase (238 aa).

N6 contributes to the 3-amino-2-oxopropyl phosphate binding site. 8–9 (DH) provides a ligand contact to 1-deoxy-D-xylulose 5-phosphate. A 3-amino-2-oxopropyl phosphate-binding site is contributed by R17. H42 functions as the Proton acceptor in the catalytic mechanism. R44 and H49 together coordinate 1-deoxy-D-xylulose 5-phosphate. The active-site Proton acceptor is E69. Residue T99 participates in 1-deoxy-D-xylulose 5-phosphate binding. H190 (proton donor) is an active-site residue. Residues G191 and 212-213 (GH) contribute to the 3-amino-2-oxopropyl phosphate site.

The protein belongs to the PNP synthase family. Homooctamer; tetramer of dimers.

The protein resides in the cytoplasm. It catalyses the reaction 3-amino-2-oxopropyl phosphate + 1-deoxy-D-xylulose 5-phosphate = pyridoxine 5'-phosphate + phosphate + 2 H2O + H(+). It functions in the pathway cofactor biosynthesis; pyridoxine 5'-phosphate biosynthesis; pyridoxine 5'-phosphate from D-erythrose 4-phosphate: step 5/5. Functionally, catalyzes the complicated ring closure reaction between the two acyclic compounds 1-deoxy-D-xylulose-5-phosphate (DXP) and 3-amino-2-oxopropyl phosphate (1-amino-acetone-3-phosphate or AAP) to form pyridoxine 5'-phosphate (PNP) and inorganic phosphate. The sequence is that of Pyridoxine 5'-phosphate synthase from Chlorobium phaeobacteroides (strain BS1).